Reading from the N-terminus, the 492-residue chain is MSSWKDSLTSIPGTVAQLINESASNLLHASSTLGSTVGLGGSGSTGSGSEAGGSEESGPQGAEYRALPIPASLVREQWRLIFTSDANIQDLQAAIAHCRDLVLLSEELSEERRWLVRHLVDLRYSLQELEEAQEQHSLSSDMVVMNAIRAVVGHHFVPHHPHHGKRNRLQAAAKRNYCDHCTTIIWSVVQNSYVCSDCGFLVHQKCIDGVKRVCAHVLVSERQHPISEICPEIGLASQGYKCAECGTMLNIKNTWIEPRLCDYSGLYYCPRCNWNDSNFIPARIIHNWDFSPRRVSRTALQEIRLFLNKPLIRLEEDNPKLFVFVEKLCAVKKLRQNLVHMRHYLAACKIASELKLVDQQLGVRRHLAQSNEFYSLSDLSQVESGALSEFLQGVFKAFNDHIRSCPMCLAQAYICEICSNNEVIFPFDDGCIKCDQCNSIFHRVCLTRKNMICPKCIRIQERRLQLDRMKSTEDDDDDDDGVATDDDVTAAE.

Positions 38 to 51 (GLGGSGSTGSGSEA) are enriched in gly residues. The tract at residues 38–62 (GLGGSGSTGSGSEAGGSEESGPQGA) is disordered. 2 consecutive Phorbol-ester/DAG-type zinc fingers follow at residues 161-214 (PHHG…KRVC) and 400-453 (DHIR…NMIC). The segment at 468–492 (RMKSTEDDDDDDDGVATDDDVTAAE) is disordered. A compositionally biased stretch (acidic residues) spans 473-492 (EDDDDDDDGVATDDDVTAAE).

The protein belongs to the DEF8 family.

The protein is Differentially expressed in FDCP 8 homolog of Drosophila melanogaster (Fruit fly).